A 113-amino-acid polypeptide reads, in one-letter code: Hydrogenase maturation factor HybF (113 aa).

Ni(2+)-binding residues include His2 and Glu3. Positions 73, 76, 89, and 92 each coordinate Zn(2+).

It belongs to the HypA/HybF family. HybF subfamily.

In terms of biological role, involved in the maturation of [NiFe] hydrogenases. Required for nickel insertion into the metal center of the hydrogenase. The chain is Hydrogenase maturation factor HybF from Salmonella typhi.